Reading from the N-terminus, the 122-residue chain is Large ribosomal subunit protein uL14 (122 aa).

The protein belongs to the universal ribosomal protein uL14 family. In terms of assembly, part of the 50S ribosomal subunit. Forms a cluster with proteins L3 and L19. In the 70S ribosome, L14 and L19 interact and together make contacts with the 16S rRNA in bridges B5 and B8.

Functionally, binds to 23S rRNA. Forms part of two intersubunit bridges in the 70S ribosome. In Mycobacteroides abscessus (strain ATCC 19977 / DSM 44196 / CCUG 20993 / CIP 104536 / JCM 13569 / NCTC 13031 / TMC 1543 / L948) (Mycobacterium abscessus), this protein is Large ribosomal subunit protein uL14.